A 236-amino-acid chain; its full sequence is Biosynthetic peptidoglycan transglycosylase (236 aa).

Residues 12 to 31 (ALLWFVAGSIVLVLVFRWVP) traverse the membrane as a helical segment.

Belongs to the glycosyltransferase 51 family.

It is found in the cell inner membrane. It catalyses the reaction [GlcNAc-(1-&gt;4)-Mur2Ac(oyl-L-Ala-gamma-D-Glu-L-Lys-D-Ala-D-Ala)](n)-di-trans,octa-cis-undecaprenyl diphosphate + beta-D-GlcNAc-(1-&gt;4)-Mur2Ac(oyl-L-Ala-gamma-D-Glu-L-Lys-D-Ala-D-Ala)-di-trans,octa-cis-undecaprenyl diphosphate = [GlcNAc-(1-&gt;4)-Mur2Ac(oyl-L-Ala-gamma-D-Glu-L-Lys-D-Ala-D-Ala)](n+1)-di-trans,octa-cis-undecaprenyl diphosphate + di-trans,octa-cis-undecaprenyl diphosphate + H(+). Its pathway is cell wall biogenesis; peptidoglycan biosynthesis. In terms of biological role, peptidoglycan polymerase that catalyzes glycan chain elongation from lipid-linked precursors. The polypeptide is Biosynthetic peptidoglycan transglycosylase (Pseudomonas putida (strain ATCC 47054 / DSM 6125 / CFBP 8728 / NCIMB 11950 / KT2440)).